The chain runs to 274 residues: Hydroxyethylthiazole kinase (274 aa).

Residue methionine 46 coordinates substrate. Arginine 122 and threonine 173 together coordinate ATP. Glycine 200 provides a ligand contact to substrate.

The protein belongs to the Thz kinase family. The cofactor is Mg(2+).

The enzyme catalyses 5-(2-hydroxyethyl)-4-methylthiazole + ATP = 4-methyl-5-(2-phosphooxyethyl)-thiazole + ADP + H(+). Its pathway is cofactor biosynthesis; thiamine diphosphate biosynthesis; 4-methyl-5-(2-phosphoethyl)-thiazole from 5-(2-hydroxyethyl)-4-methylthiazole: step 1/1. Its function is as follows. Catalyzes the phosphorylation of the hydroxyl group of 4-methyl-5-beta-hydroxyethylthiazole (THZ). This chain is Hydroxyethylthiazole kinase, found in Clostridium tetani (strain Massachusetts / E88).